Reading from the N-terminus, the 203-residue chain is Putative archaetidylserine decarboxylase proenzyme (203 aa).

Catalysis depends on Ser171, which acts as the Schiff-base intermediate with substrate; via pyruvic acid. Ser171 is modified (pyruvic acid (Ser); by autocatalysis).

Belongs to the phosphatidylserine decarboxylase family. PSD-A subfamily. In terms of assembly, heterodimer of a large membrane-associated beta subunit and a small pyruvoyl-containing alpha subunit. The cofactor is pyruvate. Is synthesized initially as an inactive proenzyme. Formation of the active enzyme involves a self-maturation process in which the active site pyruvoyl group is generated from an internal serine residue via an autocatalytic post-translational modification. Two non-identical subunits are generated from the proenzyme in this reaction, and the pyruvate is formed at the N-terminus of the alpha chain, which is derived from the carboxyl end of the proenzyme. The post-translation cleavage follows an unusual pathway, termed non-hydrolytic serinolysis, in which the side chain hydroxyl group of the serine supplies its oxygen atom to form the C-terminus of the beta chain, while the remainder of the serine residue undergoes an oxidative deamination to produce ammonia and the pyruvoyl prosthetic group on the alpha chain.

Its subcellular location is the cell membrane. The enzyme catalyses archaetidylserine + H(+) = archaetidylethanolamine + CO2. Functionally, catalyzes the formation of archaetidylethanolamine (PtdEtn) from archaetidylserine (PtdSer). The chain is Putative archaetidylserine decarboxylase proenzyme from Methanosarcina barkeri (strain Fusaro / DSM 804).